We begin with the raw amino-acid sequence, 377 residues long: 2-aminoethylphosphonate--pyruvate transaminase (377 aa).

Position 194 is an N6-(pyridoxal phosphate)lysine (lysine 194).

Belongs to the class-V pyridoxal-phosphate-dependent aminotransferase family. PhnW subfamily. As to quaternary structure, homodimer. Requires pyridoxal 5'-phosphate as cofactor.

It catalyses the reaction (2-aminoethyl)phosphonate + pyruvate = phosphonoacetaldehyde + L-alanine. Its function is as follows. Involved in phosphonate degradation. This Cupriavidus necator (strain ATCC 17699 / DSM 428 / KCTC 22496 / NCIMB 10442 / H16 / Stanier 337) (Ralstonia eutropha) protein is 2-aminoethylphosphonate--pyruvate transaminase.